A 795-amino-acid polypeptide reads, in one-letter code: RINT1-like protein MAG2 (795 aa).

Residues 35-64 (TGLVSELQTEISELDQRLAGLNRQLESGLA) are a coiled coil. The tract at residues 91-111 (TSVTRSASDSGKEEEATEHVA) is disordered. A compositionally biased stretch (basic and acidic residues) spans 100–111 (SGKEEEATEHVA). In terms of domain architecture, RINT1/TIP20 spans 207-795 (ALAMMRPQAI…KKVAKSRVFS (589 aa)).

It belongs to the RINT1 family. As to quaternary structure, interacts with SEC20 and SYP81. Interacts with ZW10 (via the central region). Forms a complex with ZW10/MIP1, MIP2 and MIP3 on the endoplasmic reticulum. Highly expressed in dry seeds. Expressed at low levels in roots, rosette and cauline leaves, stems and flowers.

It localises to the endoplasmic reticulum membrane. Functionally, functions in the anterograde transport of storage protein precursors from the endoplasmic reticulum (ER) to the Golgi complex and in the retrograde transport from the Golgi complex to the ER. Forms a complex with ZW10/MIP1, MIP2 and MIP3 on the ER that may be responsible for efficient transport of seed storage proteins. Required for the responses to environmental stresses during seed germination and vegetative growth. Probably not involved in the retrograde transport from the ER to the apoplast. The chain is RINT1-like protein MAG2 from Arabidopsis thaliana (Mouse-ear cress).